A 1439-amino-acid chain; its full sequence is Probable histone acetyltransferase HAC-like 2 (1439 aa).

Disordered stretches follow at residues 1 to 43 (MKQG…ASAD) and 313 to 335 (YGIS…TPTP). The segment covering 325 to 335 (VNPSTRSTPTP) has biased composition (polar residues). Residues 607 to 687 (ENTKQYHAQA…NEHCHVCCKA (81 aa)) form a TAZ-type zinc finger. A PHD-type; degenerate zinc finger spans residues 827–933 (KIHCHVQQET…EYTCFKCYIE (107 aa)). The 436-residue stretch at 948-1383 (VRGAKDLPRT…MLYHLHNPTG (436 aa)) folds into the CBP/p300-type HAT domain. Residues 964 to 989 (EERLFKRLREERQERANKLKTSLDEV) adopt a coiled-coil conformation. Acetyl-CoA is bound by residues 1071 to 1073 (LDS), 1090 to 1091 (RT), and Trp1146. A ZZ-type zinc finger spans residues 1265–1328 (HLQYSCSHCC…ILHPVEIVGV (64 aa)). Residues Cys1270, Cys1273, Cys1285, Cys1288, Cys1294, Cys1297, His1310, and His1318 each contribute to the Zn(2+) site.

It localises to the nucleus. It carries out the reaction L-lysyl-[protein] + acetyl-CoA = N(6)-acetyl-L-lysyl-[protein] + CoA + H(+). Its function is as follows. Acetyltransferase enzyme. Acetylates histones, giving a specific tag for transcriptional activation. The polypeptide is Probable histone acetyltransferase HAC-like 2 (Oryza sativa subsp. japonica (Rice)).